We begin with the raw amino-acid sequence, 449 residues long: Asparagine--tRNA ligase (449 aa).

This sequence belongs to the class-II aminoacyl-tRNA synthetase family. In terms of assembly, homodimer.

It localises to the cytoplasm. It carries out the reaction tRNA(Asn) + L-asparagine + ATP = L-asparaginyl-tRNA(Asn) + AMP + diphosphate + H(+). This chain is Asparagine--tRNA ligase, found in Deinococcus geothermalis (strain DSM 11300 / CIP 105573 / AG-3a).